Consider the following 195-residue polypeptide: MLKFRLILTVLTVLLITVNGQFGVNIENKSSTSSSKSAASKPSGNFAIPTALRRPNPFLQRLPSAAADQEALFQSKTAQAQPQPSAQSTNKPSFQNGQQSGGNQPMYPNQPDPYQTGSYQGPYNSMNSNNNNPPTMAGPVPADRISYQPAPKNTVQSGYQQPMPGQQSMQVPNNGPSLPAGPSYDLHNQYPPQQN.

The signal sequence occupies residues 1-20 (MLKFRLILTVLTVLLITVNG). A disordered region spans residues 26–195 (IENKSSTSSS…LHNQYPPQQN (170 aa)). N-linked (GlcNAc...) asparagine glycosylation is present at N28. 2 stretches are compositionally biased toward low complexity: residues 29–43 (KSST…SKPS) and 74–104 (QSKT…GGNQ). 2 stretches are compositionally biased toward polar residues: residues 112 to 123 (DPYQTGSYQGPY) and 151 to 176 (PKNT…NNGP).

As to expression, component of the acid-soluble organic matrix of calcified layers of the shell (at protein level).

It localises to the secreted. This is an uncharacterized protein from Lottia gigantea (Giant owl limpet).